Reading from the N-terminus, the 101-residue chain is Immunity protein CdiI-2 (101 aa).

In terms of assembly, specifically interacts with the truncated CT fragment of cognate toxin protein CdiA-2, which inhibits CdiA-2 tRNA nuclease activity.

Functionally, immunity protein component of a toxin-immunity protein module, which functions as a cellular contact-dependent growth inhibition (CDI) system. CDI modules allow bacteria to communicate with and inhibit the growth of closely related neighboring bacteria in a contact-dependent fashion. Neutralizes the toxic activity of cognate toxin CdiA (C-terminal 301 residue CT fragment) upon expression in E.coli. Does not inhibit toxic activity of CdiA from other strains of B.pseudomallei. Its function is as follows. Expression of this cdiAIB locus in B.thailandensis confers protection against other bacteria carrying the locus; growth inhibition requires cellular contact. This Burkholderia pseudomallei (strain 1026b) protein is Immunity protein CdiI-2 (cdiI2).